Reading from the N-terminus, the 106-residue chain is Large ribosomal subunit protein uL23 (106 aa).

It belongs to the universal ribosomal protein uL23 family. Part of the 50S ribosomal subunit. Contacts protein L29, and trigger factor when it is bound to the ribosome.

In terms of biological role, one of the early assembly proteins it binds 23S rRNA. One of the proteins that surrounds the polypeptide exit tunnel on the outside of the ribosome. Forms the main docking site for trigger factor binding to the ribosome. The chain is Large ribosomal subunit protein uL23 from Acinetobacter baumannii (strain SDF).